Here is a 107-residue protein sequence, read N- to C-terminus: Ferredoxin-6 (107 aa).

Residues 2–106 (AKIIFIEHNG…GLVVHLPEKQ (105 aa)) form the 2Fe-2S ferredoxin-type domain. Cysteine 40, cysteine 46, cysteine 49, and cysteine 87 together coordinate [2Fe-2S] cluster.

The protein belongs to the adrenodoxin/putidaredoxin family. It depends on [2Fe-2S] cluster as a cofactor.

Ferredoxins are small electron carrier proteins that participate in various redox reactions. FdVI is an essential protein required for growth of R.capsulatus. May be involved in Fe-S cluster assembly. In Rhodobacter capsulatus (Rhodopseudomonas capsulata), this protein is Ferredoxin-6.